Consider the following 543-residue polypeptide: MTNYIFVTGGVVSSLGKGIAAASLAAILEARGLNVTMLKLDPYINVDPGTMSPIQHGEVFVTDDGAETDLDLGHYERFIRTRMTKRNNFTTGRVYEEVIKRERRGDYLGATIQVIPHITNEIKRRIIAGAEGVDVAIVEIGGTVGDIESQPFLEAIRQLGTEVGRDHAMYMHLTLVPYIAVSGEVKTKPTQHSVKELRSIGIQPDILVCRSENALPSNERSKIALFTNVADKAVISLKDANSIYKIPAALKAQGMDELVVQRFGLECPEADLTEWEQVLYAESNPVGEVTIGMVGKYVELPDAYKSVNEALKHAGLKNRLTVNIRYVDSQDIESKGEQILHGLDAILVPGGFGERGIEGKIAAAKYAREQKVPYLGICLGMQVAIIEFARNVAGMESANSSEFDPQTPYPVVGLITEWLDADGSTAQRSEASDLGGTMRLGSQLCHLIPGSKVHDLYGSAEIYERHRHRYEVNNNLRDKLEASGLKVTGLSTDKRLVEVIELGDHPWFVAGQFHPEFNSTPRDGHPLFEGFVKAAGEYYKNNN.

The interval 1-265 (MTNYIFVTGG…DELVVQRFGL (265 aa)) is amidoligase domain. Ser-13 is a CTP binding site. Ser-13 provides a ligand contact to UTP. ATP-binding positions include 14–19 (SLGKGI) and Asp-71. Positions 71 and 139 each coordinate Mg(2+). CTP-binding positions include 146–148 (DIE), 186–191 (KTKPTQ), and Lys-222. Residues 186–191 (KTKPTQ) and Lys-222 each bind UTP. Residue 238–240 (KDA) participates in ATP binding. One can recognise a Glutamine amidotransferase type-1 domain in the interval 290 to 541 (TIGMVGKYVE…VKAAGEYYKN (252 aa)). Position 351 (Gly-351) interacts with L-glutamine. The active-site Nucleophile; for glutamine hydrolysis is Cys-378. Residues 379–382 (LGMQ), Glu-402, and Arg-469 each bind L-glutamine. Active-site residues include His-514 and Glu-516.

The protein belongs to the CTP synthase family. In terms of assembly, homotetramer.

The catalysed reaction is UTP + L-glutamine + ATP + H2O = CTP + L-glutamate + ADP + phosphate + 2 H(+). The enzyme catalyses L-glutamine + H2O = L-glutamate + NH4(+). It catalyses the reaction UTP + NH4(+) + ATP = CTP + ADP + phosphate + 2 H(+). Its pathway is pyrimidine metabolism; CTP biosynthesis via de novo pathway; CTP from UDP: step 2/2. Allosterically activated by GTP, when glutamine is the substrate; GTP has no effect on the reaction when ammonia is the substrate. The allosteric effector GTP functions by stabilizing the protein conformation that binds the tetrahedral intermediate(s) formed during glutamine hydrolysis. Inhibited by the product CTP, via allosteric rather than competitive inhibition. Its function is as follows. Catalyzes the ATP-dependent amination of UTP to CTP with either L-glutamine or ammonia as the source of nitrogen. Regulates intracellular CTP levels through interactions with the four ribonucleotide triphosphates. The chain is CTP synthase from Pseudoalteromonas atlantica (strain T6c / ATCC BAA-1087).